Reading from the N-terminus, the 357-residue chain is Peptide chain release factor 1 (357 aa).

Gln235 carries the N5-methylglutamine modification.

The protein belongs to the prokaryotic/mitochondrial release factor family. Methylated by PrmC. Methylation increases the termination efficiency of RF1.

It is found in the cytoplasm. Functionally, peptide chain release factor 1 directs the termination of translation in response to the peptide chain termination codons UAG and UAA. The chain is Peptide chain release factor 1 from Alkaliphilus metalliredigens (strain QYMF).